Consider the following 63-residue polypeptide: Large ribosomal subunit protein uL29 (63 aa).

Belongs to the universal ribosomal protein uL29 family.

This is Large ribosomal subunit protein uL29 from Idiomarina loihiensis (strain ATCC BAA-735 / DSM 15497 / L2-TR).